The sequence spans 502 residues: Bone morphogenetic protein receptor type-1B (502 aa).

The segment covering 1 to 10 (MPLLSSSKLS) has biased composition (polar residues). A signal peptide spans 1-13 (MPLLSSSKLSMES). Positions 1-27 (MPLLSSSKLSMESRKEDSEGTAPAPPQ) are disordered. Topologically, residues 14–126 (RKEDSEGTAP…DFAEGNIHHK (113 aa)) are extracellular. Cystine bridges form between Cys32/Cys53, Cys34/Cys38, Cys47/Cys71, Cys81/Cys95, and Cys96/Cys102. Asn44 carries N-linked (GlcNAc...) asparagine glycosylation. The chain crosses the membrane as a helical span at residues 127-148 (ALLISVTVCSILLVLIIIFCYF). Residues 149–502 (RYKRQEARPR…KMSESQDIKL (354 aa)) are Cytoplasmic-facing. Residues 174-203 (ESLKDLIEQSQSSGSGSGLPLLVQRTIAKQ) enclose the GS domain. The Protein kinase domain maps to 204–494 (IQMVKQIGKG…LRVKKTLAKM (291 aa)). Residues 210 to 218 (IGKGRYGEV) and Lys231 contribute to the ATP site. Asp332 functions as the Proton acceptor in the catalytic mechanism.

Belongs to the protein kinase superfamily. TKL Ser/Thr protein kinase family. TGFB receptor subfamily. Requires Mg(2+) as cofactor. The cofactor is Mn(2+). Post-translationally, autophosphorylated.

It localises to the cell membrane. It catalyses the reaction L-threonyl-[receptor-protein] + ATP = O-phospho-L-threonyl-[receptor-protein] + ADP + H(+). It carries out the reaction L-seryl-[receptor-protein] + ATP = O-phospho-L-seryl-[receptor-protein] + ADP + H(+). On ligand binding, forms a receptor complex consisting of two type II and two type I transmembrane serine/threonine kinases. Type II receptors phosphorylate and activate type I receptors which autophosphorylate, then bind and activate SMAD transcription. Positively regulates chondrocyte differentiation. This Gallus gallus (Chicken) protein is Bone morphogenetic protein receptor type-1B (BMPR1B).